The chain runs to 431 residues: Chaperone SurA (431 aa).

A signal peptide spans 1–22 (MKLWKPTLISVLSALTLFNAHA). 2 consecutive PpiC domains span residues 173–271 (TVQY…KIDD) and 280–380 (VTEV…EVLD).

It localises to the periplasm. The enzyme catalyses [protein]-peptidylproline (omega=180) = [protein]-peptidylproline (omega=0). Chaperone involved in the correct folding and assembly of outer membrane proteins. Recognizes specific patterns of aromatic residues and the orientation of their side chains, which are found more frequently in integral outer membrane proteins. May act in both early periplasmic and late outer membrane-associated steps of protein maturation. The chain is Chaperone SurA from Vibrio cholerae serotype O1 (strain ATCC 39315 / El Tor Inaba N16961).